Reading from the N-terminus, the 173-residue chain is Crossover junction endodeoxyribonuclease RuvC (173 aa).

Catalysis depends on residues Asp-8, Glu-67, and Asp-139. Residues Asp-8, Glu-67, and Asp-139 each coordinate Mg(2+).

Belongs to the RuvC family. As to quaternary structure, homodimer which binds Holliday junction (HJ) DNA. The HJ becomes 2-fold symmetrical on binding to RuvC with unstacked arms; it has a different conformation from HJ DNA in complex with RuvA. In the full resolvosome a probable DNA-RuvA(4)-RuvB(12)-RuvC(2) complex forms which resolves the HJ. Mg(2+) is required as a cofactor.

Its subcellular location is the cytoplasm. The catalysed reaction is Endonucleolytic cleavage at a junction such as a reciprocal single-stranded crossover between two homologous DNA duplexes (Holliday junction).. The RuvA-RuvB-RuvC complex processes Holliday junction (HJ) DNA during genetic recombination and DNA repair. Endonuclease that resolves HJ intermediates. Cleaves cruciform DNA by making single-stranded nicks across the HJ at symmetrical positions within the homologous arms, yielding a 5'-phosphate and a 3'-hydroxyl group; requires a central core of homology in the junction. The consensus cleavage sequence is 5'-(A/T)TT(C/G)-3'. Cleavage occurs on the 3'-side of the TT dinucleotide at the point of strand exchange. HJ branch migration catalyzed by RuvA-RuvB allows RuvC to scan DNA until it finds its consensus sequence, where it cleaves and resolves the cruciform DNA. The chain is Crossover junction endodeoxyribonuclease RuvC from Vibrio vulnificus (strain YJ016).